The following is a 545-amino-acid chain: Chaperonin GroEL (545 aa).

Residues 29-32 (TLGP), Lys50, 86-90 (DGTTT), Gly413, 479-481 (NAA), and Asp496 contribute to the ATP site. Residues 525 to 545 (KPEKEKAPAAAGAPDMGGMDF) form a disordered region. The segment covering 532–545 (PAAAGAPDMGGMDF) has biased composition (low complexity).

It belongs to the chaperonin (HSP60) family. Forms a cylinder of 14 subunits composed of two heptameric rings stacked back-to-back. Interacts with the co-chaperonin GroES.

It localises to the cytoplasm. It catalyses the reaction ATP + H2O + a folded polypeptide = ADP + phosphate + an unfolded polypeptide.. Functionally, together with its co-chaperonin GroES, plays an essential role in assisting protein folding. The GroEL-GroES system forms a nano-cage that allows encapsulation of the non-native substrate proteins and provides a physical environment optimized to promote and accelerate protein folding. In Deinococcus geothermalis (strain DSM 11300 / CIP 105573 / AG-3a), this protein is Chaperonin GroEL.